The primary structure comprises 108 residues: MFGERLKKCRTSKGYSQQRMADFLGITRQGYGKYEIGKAEPDLKTLTKLSNILGVSTDFLLKGTHAQFDLDEILNDPETLIAGYNGMISEEQAKELLYYLLKKEFEEH.

The 55-residue stretch at Leu-6–Leu-60 folds into the HTH cro/C1-type domain. Positions Gln-17–Ile-36 form a DNA-binding region, H-T-H motif.

This Bacillus subtilis (strain 168) protein is SPbeta prophage-derived uncharacterized HTH-type transcriptional regulator YonR (yonR).